Here is a 489-residue protein sequence, read N- to C-terminus: Toxin coregulated pilus biosynthesis outer membrane protein C (489 aa).

Positions 1–16 are cleaved as a signal peptide; the sequence is MKKTIISTLVIGLVSG. Cys17 carries N-palmitoyl cysteine lipidation. Cys17 is lipidated: S-diacylglycerol cysteine. 4 consecutive transmembrane segments (helical) span residues 174–190, 294–308, 402–417, and 442–457; these read FSSSMQIGGTSGTSSGL, AISLSQVGGGLGASY, QLVSIGTAQGITLPTV, and NYIQNSNGVQLLGGGT.

The protein resides in the cell membrane. Functionally, involved in TCP pilus biogenesis. The protein is Toxin coregulated pilus biosynthesis outer membrane protein C (tcpC) of Vibrio cholerae serotype O1 (strain ATCC 39315 / El Tor Inaba N16961).